A 661-amino-acid chain; its full sequence is Putative DUF21 domain-containing protein At3g13070, chloroplastic (661 aa).

Residues 1–71 (MMGMALELSV…RSCEFSYRSR (71 aa)) constitute a chloroplast transit peptide. The next 5 membrane-spanning stretches (helical) occupy residues 105-125 (GIVI…KVLA), 162-182 (GLIL…ETSI), 213-233 (FLTT…ALVT), 239-259 (IFGE…ILLL), and 285-305 (WLSL…MGIL). In terms of domain architecture, CNNM transmembrane spans 154–340 (VLTVLREQGL…ELSGAIEEEE (187 aa)). CBS domains lie at 359–420 (MTPL…LLES) and 426–484 (MAHK…IFDE). Disordered stretches follow at residues 559–578 (ESWE…QEPK) and 628–661 (SSEE…KKQQ). Acidic residues-rich tracts occupy residues 560–570 (SWEEDGEEEEG) and 630–643 (EEDD…EDQS). Basic and acidic residues predominate over residues 648-661 (LDEHVLADNSKKQQ).

It is found in the plastid. It localises to the chloroplast membrane. The protein is Putative DUF21 domain-containing protein At3g13070, chloroplastic (CBSDUFCH1) of Arabidopsis thaliana (Mouse-ear cress).